We begin with the raw amino-acid sequence, 126 residues long: Large ribosomal subunit protein bL17 (126 aa).

The protein belongs to the bacterial ribosomal protein bL17 family. In terms of assembly, part of the 50S ribosomal subunit. Contacts protein L32.

The chain is Large ribosomal subunit protein bL17 from Vibrio atlanticus (strain LGP32) (Vibrio splendidus (strain Mel32)).